The chain runs to 432 residues: Glutamyl-tRNA reductase (432 aa).

Substrate-binding positions include 49-52, serine 109, 114-116, and glutamine 120; these read TCNR and EGQ. Catalysis depends on cysteine 50, which acts as the Nucleophile. 189–194 is a binding site for NADP(+); that stretch reads GAGKMS.

This sequence belongs to the glutamyl-tRNA reductase family. In terms of assembly, homodimer.

It is found in the plastid. The protein localises to the cyanelle. The catalysed reaction is (S)-4-amino-5-oxopentanoate + tRNA(Glu) + NADP(+) = L-glutamyl-tRNA(Glu) + NADPH + H(+). The protein operates within porphyrin-containing compound metabolism; protoporphyrin-IX biosynthesis; 5-aminolevulinate from L-glutamyl-tRNA(Glu): step 1/2. Its pathway is porphyrin-containing compound metabolism; chlorophyll biosynthesis. In terms of biological role, catalyzes the NADPH-dependent reduction of glutamyl-tRNA(Glu) to glutamate 1-semialdehyde (GSA). The polypeptide is Glutamyl-tRNA reductase (Cyanophora paradoxa).